A 70-amino-acid polypeptide reads, in one-letter code: Phycocyanin-645 alpha-2 chain (70 aa).

Arg16 is a binding site for (2R,3E)-phycocyanobilin. The mesobiliverdin site is built by Cys18, Tyr26, and Lys41.

Belongs to the phycoerythrin family. In terms of assembly, heterotetramer of 2 different alpha chains and 2 identical beta chains which form 2 alpha-beta heterodimers within the heterotetramer. In terms of processing, contains one phycocyanobilin chromophore, one mesobiliverdin chromophore and one 15,16-dihydrobiliverdin chromophore with binding mediated by both the alpha and beta subunits.

It localises to the plastid. The protein localises to the chloroplast thylakoid membrane. Functionally, light-harvesting photosynthetic tetrapyrrole chromophore-protein from the phycobiliprotein complex. This Chroomonas sp protein is Phycocyanin-645 alpha-2 chain.